The chain runs to 242 residues: Probable 2-phosphosulfolactate phosphatase (242 aa).

This sequence belongs to the ComB family. Mg(2+) serves as cofactor.

It catalyses the reaction (2R)-O-phospho-3-sulfolactate + H2O = (2R)-3-sulfolactate + phosphate. The protein is Probable 2-phosphosulfolactate phosphatase of Prochlorococcus marinus (strain NATL1A).